The primary structure comprises 101 residues: Urease subunit beta (101 aa).

Belongs to the urease beta subunit family. As to quaternary structure, heterotrimer of UreA (gamma), UreB (beta) and UreC (alpha) subunits. Three heterotrimers associate to form the active enzyme.

The protein localises to the cytoplasm. The catalysed reaction is urea + 2 H2O + H(+) = hydrogencarbonate + 2 NH4(+). It participates in nitrogen metabolism; urea degradation; CO(2) and NH(3) from urea (urease route): step 1/1. This Allorhizobium ampelinum (strain ATCC BAA-846 / DSM 112012 / S4) (Agrobacterium vitis (strain S4)) protein is Urease subunit beta.